The primary structure comprises 460 residues: UDP-N-acetylmuramoylalanine--D-glutamate ligase (460 aa).

ATP is bound at residue 120-126 (GSNGKTT).

The protein belongs to the MurCDEF family.

The protein resides in the cytoplasm. The enzyme catalyses UDP-N-acetyl-alpha-D-muramoyl-L-alanine + D-glutamate + ATP = UDP-N-acetyl-alpha-D-muramoyl-L-alanyl-D-glutamate + ADP + phosphate + H(+). The protein operates within cell wall biogenesis; peptidoglycan biosynthesis. Functionally, cell wall formation. Catalyzes the addition of glutamate to the nucleotide precursor UDP-N-acetylmuramoyl-L-alanine (UMA). The chain is UDP-N-acetylmuramoylalanine--D-glutamate ligase from Lactobacillus delbrueckii subsp. bulgaricus (strain ATCC 11842 / DSM 20081 / BCRC 10696 / JCM 1002 / NBRC 13953 / NCIMB 11778 / NCTC 12712 / WDCM 00102 / Lb 14).